A 147-amino-acid chain; its full sequence is UPF0306 protein YhbP (147 aa).

The protein belongs to the UPF0306 family.

The protein is UPF0306 protein YhbP of Salmonella choleraesuis (strain SC-B67).